The following is a 95-amino-acid chain: Alpha-conotoxin PiXXA (95 aa).

Residues 1 to 24 form the signal peptide; the sequence is MPKLEMMLLVLLILPLPYFDAAGG. Positions 25–45 are excised as a propeptide; the sequence is QSVHVDGYGDGLARYLQRGER. At proline 56 the chain carries 4-hydroxyproline. Disulfide bonds link cysteine 64/cysteine 73, cysteine 69/cysteine 81, cysteine 74/cysteine 91, and cysteine 79/cysteine 93.

It belongs to the conotoxin D superfamily. In terms of assembly, homodimer; disulfide-linked. Post-translationally, the homodimer contains 10 disulfide bonds. In terms of tissue distribution, expressed by the venom duct.

The protein localises to the secreted. Alpha-conotoxins act on postsynaptic membranes, they bind to the nicotinic acetylcholine receptors (nAChR) and thus inhibit them. Through its two C-terminal domains, this homodimeric protein would bind to two nAChR allosteric sites, located outside the nAChR C-loop of the principal binding face and at the adjacent binding interface in a clockwise direction. This toxin slowly and reversibly inhibits the ACh-induced response of the human alpha-7/CHRNA7 nAChR subtype (IC(50)=6.2 uM). The polypeptide is Alpha-conotoxin PiXXA (Conus princeps (Prince cone)).